Reading from the N-terminus, the 109-residue chain is Phosphoribosyl-ATP pyrophosphatase (109 aa).

It belongs to the PRA-PH family.

It localises to the cytoplasm. It catalyses the reaction 1-(5-phospho-beta-D-ribosyl)-ATP + H2O = 1-(5-phospho-beta-D-ribosyl)-5'-AMP + diphosphate + H(+). The protein operates within amino-acid biosynthesis; L-histidine biosynthesis; L-histidine from 5-phospho-alpha-D-ribose 1-diphosphate: step 2/9. The protein is Phosphoribosyl-ATP pyrophosphatase of Marinobacter nauticus (strain ATCC 700491 / DSM 11845 / VT8) (Marinobacter aquaeolei).